The chain runs to 292 residues: MKIYVVATIAWILLQFSAWTTTDAVTSITLDLVNPTAGQYSSFVDKIRNNVKDPNLKYGGTDIAVIGPPSKDKFLRINFQSSRGTVSLGLKRDNLYVVAYLAMDNTNVNRAYYFKSEITSAELTALFPEATTANQKALEYTEDYQSIEKNAQITQGDKSRKELGLGIDLLLTFMEAVNKKARVVKNEARFLLIAIQMTAEVARFRYIQNLVTKNFPNKFDSDNKVIQFEVSWRKISTAIYGDAKNGVFNKDYDFGFGKVRQVKDLQMGLLMYLGKPKSSNEANSTAYATTVL.

Residues methionine 1–alanine 24 form the signal peptide. Glutamate 200 is an active-site residue.

This sequence belongs to the ribosome-inactivating protein family. Type 1 RIP subfamily.

It carries out the reaction Endohydrolysis of the N-glycosidic bond at one specific adenosine on the 28S rRNA.. Its function is as follows. Ribosome-inactivating protein of type 1, inhibits protein synthesis in animal cells. Useful as immunotoxin for pharmacological applications. This chain is Ribosome-inactivating protein saporin-2 (SAP2), found in Saponaria officinalis (Common soapwort).